We begin with the raw amino-acid sequence, 2435 residues long: Highly reducing polyketide synthase ATR6 (2435 aa).

Residues 18-450 (AEPIAIVSAA…GSNAHVVLDN (433 aa)) form the Ketosynthase family 3 (KS3) domain. Catalysis depends on for beta-ketoacyl synthase activity residues C192, H331, and H371. Residues 586–883 (FVFTGQGAQW…EIGPSAALGG (298 aa)) are malonyl-CoA:ACP transacylase (MAT) domain. The active-site For malonyltransferase activity is S682. Residues 979–1125 (HDLLGGKVLG…GLVRLALNAS (147 aa)) are N-terminal hotdog fold. Residues 979–1291 (HDLLGGKVLG…LRGISMTSVG (313 aa)) form a dehydratase (DH) domain region. One can recognise a PKS/mFAS DH domain in the interval 979–1296 (HDLLGGKVLG…MTSVGLQGNV (318 aa)). H1011 (for beta-hydroxyacyl dehydratase activity) is an active-site residue. The C-terminal hotdog fold stretch occupies residues 1141-1296 (QYPTPARFWY…MTSVGLQGNV (156 aa)). Positions 1724 to 2037 (GILDTLHFAE…DHNRLRNVVI (314 aa)) are enoylreductase (ER) domain. A catalytic ketoreductase (KRc) domain region spans residues 2062–2301 (PEQTYLLVGK…ITGIAVPQPG (240 aa)). Positions 2353 to 2429 (VLLSSAVGVL…VLCQKIISRM (77 aa)) constitute a Carrier domain. S2389 carries the post-translational modification O-(pantetheine 4'-phosphoryl)serine.

It functions in the pathway mycotoxin biosynthesis. Functionally, highly reducing polyketide synthase; part of the core atranone cluster (CAC) which products are predicted to catalyze most or all steps of mycotoxin atranone synthesis, starting from geranylgeranyl pyrophosphate (GGPP). The initial cyclization of GGPP to dolabellane is probably performed by the terpene cyclase ATR13. The Baeyer-Villiger oxidation near the end of the atranone synthesis, which converts atranones D and E to atranones F and G is predicted to be catalyzed by the monooxygenase ATR8. Of the CAC's other predicted gene products, the reducing PKS ATR6 might synthesize a polyketide chain. This polyketide is probably transferred onto the atranone backbone by the polyketide transferase ATR5. Other predicted CAC products include 4 oxygenases (ATR2, ATR3, ATR4, and ATR14), 3 short-chain reductases (ATR7, ATR9, and ATR10), and a methyltransferase (ATR12). These may all be involved in the various steps of atranone biosynthesis, although their specific roles must await experimental determination. The chain is Highly reducing polyketide synthase ATR6 from Stachybotrys chlorohalonatus (strain IBT 40285).